The primary structure comprises 197 residues: Small ribosomal subunit protein uS7 (197 aa).

The protein belongs to the universal ribosomal protein uS7 family. Part of the 30S ribosomal subunit.

In terms of biological role, one of the primary rRNA binding proteins, it binds directly to 16S rRNA where it nucleates assembly of the head domain of the 30S subunit. Is located at the subunit interface close to the decoding center. The chain is Small ribosomal subunit protein uS7 from Methanopyrus kandleri (strain AV19 / DSM 6324 / JCM 9639 / NBRC 100938).